We begin with the raw amino-acid sequence, 97 residues long: Aspartyl/glutamyl-tRNA(Asn/Gln) amidotransferase subunit C (97 aa).

This sequence belongs to the GatC family. As to quaternary structure, heterotrimer of A, B and C subunits.

The enzyme catalyses L-glutamyl-tRNA(Gln) + L-glutamine + ATP + H2O = L-glutaminyl-tRNA(Gln) + L-glutamate + ADP + phosphate + H(+). It catalyses the reaction L-aspartyl-tRNA(Asn) + L-glutamine + ATP + H2O = L-asparaginyl-tRNA(Asn) + L-glutamate + ADP + phosphate + 2 H(+). Allows the formation of correctly charged Asn-tRNA(Asn) or Gln-tRNA(Gln) through the transamidation of misacylated Asp-tRNA(Asn) or Glu-tRNA(Gln) in organisms which lack either or both of asparaginyl-tRNA or glutaminyl-tRNA synthetases. The reaction takes place in the presence of glutamine and ATP through an activated phospho-Asp-tRNA(Asn) or phospho-Glu-tRNA(Gln). This chain is Aspartyl/glutamyl-tRNA(Asn/Gln) amidotransferase subunit C, found in Roseiflexus sp. (strain RS-1).